Reading from the N-terminus, the 1059-residue chain is IQ motif-containing protein H (1059 aa).

Residues 6 to 35 (KNKDEVGNILVKVQDDLRQLKKNIVQFTVQ) are a coiled coil. Positions 245 to 267 (MESAESRLLRAPPPSAASASSDN) are disordered. The region spanning 401–430 (HQAAAVRIQTCWRRYSARTAYLIRLRSKWA) is the IQ domain.

This chain is IQ motif-containing protein H (iqch), found in Danio rerio (Zebrafish).